The following is a 203-amino-acid chain: ATP synthase subunit delta, chloroplastic (203 aa).

Belongs to the ATPase delta chain family. As to quaternary structure, F-type ATPases have 2 components, F(1) - the catalytic core - and F(0) - the membrane proton channel. F(1) has five subunits: alpha(3), beta(3), gamma(1), delta(1), epsilon(1). CF(0) has four main subunits: a(1), b(1), b'(1) and c(10-14). The alpha and beta chains form an alternating ring which encloses part of the gamma chain. F(1) is attached to F(0) by a central stalk formed by the gamma and epsilon chains, while a peripheral stalk is formed by the delta, b and b' chains.

The protein localises to the plastid. It is found in the chloroplast thylakoid membrane. In terms of biological role, f(1)F(0) ATP synthase produces ATP from ADP in the presence of a proton or sodium gradient. F-type ATPases consist of two structural domains, F(1) containing the extramembraneous catalytic core and F(0) containing the membrane proton channel, linked together by a central stalk and a peripheral stalk. During catalysis, ATP synthesis in the catalytic domain of F(1) is coupled via a rotary mechanism of the central stalk subunits to proton translocation. Its function is as follows. This protein is part of the stalk that links CF(0) to CF(1). It either transmits conformational changes from CF(0) to CF(1) or is implicated in proton conduction. This Heterosigma akashiwo (strain NIES-293 / 8280G21-1) protein is ATP synthase subunit delta, chloroplastic.